We begin with the raw amino-acid sequence, 562 residues long: MENQKMPISSVPNLKDLNMISRPIANFPPSIWGDRFINYTCEDENDQTQKERQVEELKEQVRRELAATVDKPLQQLNIIDATQRLGIAYLFENEIEESLKHIYLHTYVENNCFEGSDDLYSVALWFRLLRQNGYKVSCDVFNKFRDNEGNFKNNLMEDAKGLLELYEATHVSIHGEEMLDDALEFTKTRLESVVSHLNYPLAEQVRHALYQPLHRGLPRLEAVYFFRIYEAHASHNKALLKLAKLDFNLLQSFHKKELSDIARWWKSLDFAAKFPFARDRLVEGYFWVLGVYFEPQYSLARKIIIKVFTMISTIDDIYDAYGTLDELKLFTKAMQRWDVGSLDQLPEYMKPCYKSILDVYNEIEEEMANQGSLFRMHYAKEVMKTIVEGYMDEAKWCHEKYVPTFQEYMSVALVTSGYTFLTTISYLGMGEIASKEAFDWLFSHPPVIEASESVGRLMDDMRSHKFEQERGHVASGIECYMKQYGVTEEEAHDEFRKRLVKAWKDINEECLRPYRVPKPLLTRILNLTRVIDVIYKNEDGYTHVKKAMKDNIASLLIDPVIV.

The Mg(2+) site is built by Asp315, Asp319, and Glu467. The DDXXD motif motif lies at 315–319; the sequence is DDIYD.

The protein belongs to the terpene synthase family. Tpsa subfamily. Mg(2+) is required as a cofactor. Mn(2+) serves as cofactor.

In terms of biological role, sesquiterpene synthase. This chain is Probable sesquiterpene synthase (STPS), found in Santalum murrayanum (Bitter quandong).